Consider the following 462-residue polypeptide: MSIKRLSMRLKKGIHRSWNRMTSLEAGLEEEKEIKIVEEPEPRPWKVLITGGAGHLAENLVAKLEEMTRDSIRPKIREMLEKEMPAVISTKVDKEVEKRLPMYIQIVLVDVLEPRGRVLKHHVAFVKCSFDDECTMKTALEQVDTVYHLAAVGMTGQYARDRKACMDINAVGTMNLLIWARNSGVQRFIYTSSVGVVFSGEPMYNATEEVGYPDDFYNYYCESKAHAERIVQKASGHRMRTTVLRFNGIYGPGEKRVTERVVKFMLTGMWIATCKPNGVEAQTQLSSVANCIQGLVKAELALRWSDTPHGQIYNIMDKTPVGTFSFWTPLNIALGFSSSMITVPATPIRLFAYLSQIIADRMRIDPIVSVLEVDLLLVNNTFNIEKAERDLGYEPSVSAIPEIIEHYLHRLPPDVVRPKGRSDFYVKVAVLVLGTILIFVAVFSFTFWMYLIFQRLSRWNPF.

Residues 51 to 56 (GGAGHL), Tyr220, and Lys224 each bind NAD(+). Residue Lys224 is the Proton donor of the active site. 2 helical membrane-spanning segments follow: residues 321-341 (VGTFSFWTPLNIALGFSSSMI) and 428-448 (VAVLVLGTILIFVAVFSFTFW).

This sequence belongs to the 3-beta-HSD family. As to expression, expressed exclusively in the neuron-like XXX(L/R) cells through all four larval stages and becomes fainter in adults.

It is found in the membrane. It catalyses the reaction a 3beta-hydroxy-Delta(5)-steroid + NAD(+) = a 3-oxo-Delta(5)-steroid + NADH + H(+). The enzyme catalyses cholesterol + NAD(+) = cholest-5-en-3-one + NADH + H(+). The catalysed reaction is a 3-oxo-Delta(5)-steroid = a 3-oxo-Delta(4)-steroid. It carries out the reaction cholest-5-en-3-one = cholest-4-en-3-one. Its pathway is steroid hormone biosynthesis; dafachronic acid biosynthesis. Functionally, hydroxysteroid dehydrogenase involved in the biosynthesis of dafrachonic acids. Catalyzes the dehydrogenation of cholesterol or its derivatives and the isomerization of the double carbon bond on the sterol ring. Modifies sterols into a Delta(4)-3-keto-sterols such as cholest-4-en-3-one, precursor of Delta(4)-dafachronic acid. Contributes to the production of Delta(7)-dafachronic acid in the XXX cells. Dafachronic acids act as ligands and bind directly to the nuclear hormone receptor (NHR) daf-12 suppressing dauer formation and inducing reproductive growth. Acts in parallel to AKT-1 to promote reproductive development via DAF-16/FoxO and DAF-12. The sequence is that of 3beta-hydroxysteroid dehydrogenase/Delta(5)-Delta(4) isomerase 1 from Caenorhabditis elegans.